Reading from the N-terminus, the 307-residue chain is 4-hydroxythreonine-4-phosphate dehydrogenase (307 aa).

H121 and T122 together coordinate substrate. Residues H150, H189, and H245 each contribute to the a divalent metal cation site. Positions 253, 262, and 271 each coordinate substrate.

The protein belongs to the PdxA family. As to quaternary structure, homodimer. Zn(2+) is required as a cofactor. It depends on Mg(2+) as a cofactor. Requires Co(2+) as cofactor.

It localises to the cytoplasm. The catalysed reaction is 4-(phosphooxy)-L-threonine + NAD(+) = 3-amino-2-oxopropyl phosphate + CO2 + NADH. It functions in the pathway cofactor biosynthesis; pyridoxine 5'-phosphate biosynthesis; pyridoxine 5'-phosphate from D-erythrose 4-phosphate: step 4/5. Functionally, catalyzes the NAD(P)-dependent oxidation of 4-(phosphooxy)-L-threonine (HTP) into 2-amino-3-oxo-4-(phosphooxy)butyric acid which spontaneously decarboxylates to form 3-amino-2-oxopropyl phosphate (AHAP). The chain is 4-hydroxythreonine-4-phosphate dehydrogenase from Sulfurimonas denitrificans (strain ATCC 33889 / DSM 1251) (Thiomicrospira denitrificans (strain ATCC 33889 / DSM 1251)).